The chain runs to 26 residues: Thioredoxin H-type (26 aa).

This sequence belongs to the thioredoxin family. Plant H-type subfamily.

Its subcellular location is the cytoplasm. Functionally, participates in various redox reactions through the reversible oxidation of the active center dithiol to a disulfide. The H form is known to activate a number of cytosolic enzymes. This chain is Thioredoxin H-type, found in Populus euphratica (Euphrates poplar).